The following is an 80-amino-acid chain: Exodeoxyribonuclease 7 small subunit (80 aa).

This sequence belongs to the XseB family. In terms of assembly, heterooligomer composed of large and small subunits.

It is found in the cytoplasm. It carries out the reaction Exonucleolytic cleavage in either 5'- to 3'- or 3'- to 5'-direction to yield nucleoside 5'-phosphates.. Its function is as follows. Bidirectionally degrades single-stranded DNA into large acid-insoluble oligonucleotides, which are then degraded further into small acid-soluble oligonucleotides. The polypeptide is Exodeoxyribonuclease 7 small subunit (Oleidesulfovibrio alaskensis (strain ATCC BAA-1058 / DSM 17464 / G20) (Desulfovibrio alaskensis)).